The sequence spans 217 residues: Small ribosomal subunit protein uS3 (217 aa).

In terms of domain architecture, KH type-2 spans 38-106; sequence IRKFINKELA…QVHINIIEIK (69 aa).

The protein belongs to the universal ribosomal protein uS3 family. In terms of assembly, part of the 30S ribosomal subunit. Forms a tight complex with proteins S10 and S14.

Its function is as follows. Binds the lower part of the 30S subunit head. Binds mRNA in the 70S ribosome, positioning it for translation. The chain is Small ribosomal subunit protein uS3 from Streptococcus equi subsp. equi (strain 4047).